The sequence spans 151 residues: Kinetoplast-associated protein 1 (151 aa).

Positions Met1–Leu9 are excised as a propeptide. Positions Ala13–Lys151 are disordered. Composition is skewed to low complexity over residues Ser15 to Val49, Ala70 to Lys91, and Ser101 to Gly111. Basic residues predominate over residues Lys112–Lys151.

It belongs to the KAP family. Associates with the kinetoplast DNA network.

It is found in the mitochondrion matrix. Its subcellular location is the kinetoplast. Histone H1-like DNA-binding protein involved in the organization and segregation of kinetoplast DNA (kDNA). The mitochondrial DNA of kinetoplastid protozoa consists of about 5,000 minicircles and 20 to 30 maxicircles. These circular DNAs are held together by catenation into a highly organized compact disk structure referred to as a kinetoplast DNA (kDNA) network. Binds preferentially to a specific fragment of minicircle DNA and is able to compact kDNA networks through DNA charge neutralization and condensation. The polypeptide is Kinetoplast-associated protein 1 (KAP4) (Crithidia fasciculata).